The following is a 129-amino-acid chain: Follitropin subunit beta (129 aa).

An N-terminal signal peptide occupies residues 1–20 (MKTAQFYIFFFCWKAIWCNG). Cystine bridges form between cysteine 21–cysteine 69, cysteine 35–cysteine 84, cysteine 38–cysteine 122, cysteine 46–cysteine 100, cysteine 50–cysteine 102, and cysteine 105–cysteine 112. 2 N-linked (GlcNAc...) asparagine glycosylation sites follow: asparagine 25 and asparagine 42.

It belongs to the glycoprotein hormones subunit beta family. Heterodimer. The active follitropin is a heterodimer composed of an alpha chain/CGA shared with other hormones and a unique beta chain/FSHB shown here.

Its subcellular location is the secreted. Its function is as follows. Together with the alpha chain CGA constitutes follitropin, the follicle-stimulating hormone, and provides its biological specificity to the hormone heterodimer. Binds FSHR, a G protein-coupled receptor, on target cells to activate downstream signaling pathways. Follitropin is involved in follicle development and spermatogenesis in reproductive organs. The protein is Follitropin subunit beta (FSHB) of Monodelphis domestica (Gray short-tailed opossum).